The following is a 99-amino-acid chain: Cell division protein FtsB (99 aa).

Residues 1–3 (MKF) lie on the Cytoplasmic side of the membrane. The helical transmembrane segment at 4–21 (FVITLIVLLGLLQYRLWS) threads the bilayer. Residues 22–99 (GDNSLPEYFV…GDRAVSSPSQ (78 aa)) are Periplasmic-facing. Positions 31–73 (VLQKQIAAQQDGNAKLNERNQVLKEEIIDLKSGTEAIEERARN) form a coiled coil.

The protein belongs to the FtsB family. In terms of assembly, part of a complex composed of FtsB, FtsL and FtsQ.

It is found in the cell inner membrane. Functionally, essential cell division protein. May link together the upstream cell division proteins, which are predominantly cytoplasmic, with the downstream cell division proteins, which are predominantly periplasmic. The protein is Cell division protein FtsB of Shewanella oneidensis (strain ATCC 700550 / JCM 31522 / CIP 106686 / LMG 19005 / NCIMB 14063 / MR-1).